We begin with the raw amino-acid sequence, 239 residues long: Protein TIPIN homolog (239 aa).

Acidic residues-rich tracts occupy residues 1–14 (MDEMDDFFGNDELD) and 156–166 (DGADDDEDDLF). Disordered stretches follow at residues 1–38 (MDEMDDFFGNDELDREPSPFGEEAIEDNTGEEGSRRII) and 135–239 (ESTD…NNDW). Basic and acidic residues-rich tracts occupy residues 169-193 (LPEKETPTKPINHTEKVVDSPEKKN) and 206-223 (YRMMEEERLREEQEAREA). The span at 224–239 (EAEDELMEDFDLNNDW) shows a compositional bias: acidic residues.

This sequence belongs to the CSM3 family.

It is found in the cytoplasm. The protein resides in the nucleus. In terms of biological role, required for normal progression of S-phase. Important for cell survival after DNA damage or replication stress. This is Protein TIPIN homolog from Caenorhabditis briggsae.